The primary structure comprises 292 residues: Formamidopyrimidine-DNA glycosylase (292 aa).

The active-site Schiff-base intermediate with DNA is P2. E3 functions as the Proton donor in the catalytic mechanism. Residue K61 is the Proton donor; for beta-elimination activity of the active site. Residues H96, R115, and K161 each coordinate DNA. The segment at 247–281 adopts an FPG-type zinc-finger fold; that stretch reads SAYGQEDRPCPRCGTAIRREKFMNRSSFSCPKCQP. The active-site Proton donor; for delta-elimination activity is the R271.

This sequence belongs to the FPG family. As to quaternary structure, monomer. Requires Zn(2+) as cofactor.

The enzyme catalyses Hydrolysis of DNA containing ring-opened 7-methylguanine residues, releasing 2,6-diamino-4-hydroxy-5-(N-methyl)formamidopyrimidine.. It carries out the reaction 2'-deoxyribonucleotide-(2'-deoxyribose 5'-phosphate)-2'-deoxyribonucleotide-DNA = a 3'-end 2'-deoxyribonucleotide-(2,3-dehydro-2,3-deoxyribose 5'-phosphate)-DNA + a 5'-end 5'-phospho-2'-deoxyribonucleoside-DNA + H(+). Its function is as follows. Involved in base excision repair of DNA damaged by oxidation or by mutagenic agents. Acts as a DNA glycosylase that recognizes and removes damaged bases. Has a preference for oxidized purines, such as 7,8-dihydro-8-oxoguanine (8-oxoG). Has AP (apurinic/apyrimidinic) lyase activity and introduces nicks in the DNA strand. Cleaves the DNA backbone by beta-delta elimination to generate a single-strand break at the site of the removed base with both 3'- and 5'-phosphates. In Rhodococcus jostii (strain RHA1), this protein is Formamidopyrimidine-DNA glycosylase.